Consider the following 390-residue polypeptide: Tryptophan synthase beta chain 2 (390 aa).

An N6-(pyridoxal phosphate)lysine modification is found at Lys83.

It belongs to the TrpB family. In terms of assembly, tetramer of two alpha and two beta chains. Pyridoxal 5'-phosphate is required as a cofactor.

The catalysed reaction is (1S,2R)-1-C-(indol-3-yl)glycerol 3-phosphate + L-serine = D-glyceraldehyde 3-phosphate + L-tryptophan + H2O. It participates in amino-acid biosynthesis; L-tryptophan biosynthesis; L-tryptophan from chorismate: step 5/5. The beta subunit is responsible for the synthesis of L-tryptophan from indole and L-serine. The chain is Tryptophan synthase beta chain 2 (trpB2) from Methanothermobacter marburgensis (strain ATCC BAA-927 / DSM 2133 / JCM 14651 / NBRC 100331 / OCM 82 / Marburg) (Methanobacterium thermoautotrophicum).